The sequence spans 256 residues: tRNA (guanine-N(7)-)-methyltransferase (256 aa).

Positions 1-11 (MHPQDASTEQT) are enriched in polar residues. The interval 1–35 (MHPQDASTEQTPVDDDQVESSQPVHAPEDVAHPRR) is disordered. Positions 85, 110, 137, and 160 each coordinate S-adenosyl-L-methionine. Asp-160 is a catalytic residue. Residue Lys-164 coordinates substrate. Residues 166–171 (RHNKRR) are interaction with RNA. Substrate is bound by residues Asp-196 and 234–237 (TKFE).

Belongs to the class I-like SAM-binding methyltransferase superfamily. TrmB family.

The catalysed reaction is guanosine(46) in tRNA + S-adenosyl-L-methionine = N(7)-methylguanosine(46) in tRNA + S-adenosyl-L-homocysteine. Its pathway is tRNA modification; N(7)-methylguanine-tRNA biosynthesis. In terms of biological role, catalyzes the formation of N(7)-methylguanine at position 46 (m7G46) in tRNA. In Cupriavidus pinatubonensis (strain JMP 134 / LMG 1197) (Cupriavidus necator (strain JMP 134)), this protein is tRNA (guanine-N(7)-)-methyltransferase.